Consider the following 459-residue polypeptide: Ribosomal protein uS12 methylthiotransferase RimO (459 aa).

The tract at residues 1–28 (MSTNPPDLRPDLAPKARLTQPDRPGQPT) is disordered. An MTTase N-terminal domain is found at 27-137 (PTIGMVSLGC…VLDAVHAAVP (111 aa)). [4Fe-4S] cluster contacts are provided by cysteine 36, cysteine 72, cysteine 101, cysteine 168, cysteine 172, and cysteine 175. The 234-residue stretch at 154–387 (LTPRHFSYLK…MAKSQDISEA (234 aa)) folds into the Radical SAM core domain. In terms of domain architecture, TRAM spans 390 to 457 (AAKVAQRLEV…EYDLWGRLAP (68 aa)).

The protein belongs to the methylthiotransferase family. RimO subfamily. [4Fe-4S] cluster is required as a cofactor.

The protein localises to the cytoplasm. The catalysed reaction is L-aspartate(89)-[ribosomal protein uS12]-hydrogen + (sulfur carrier)-SH + AH2 + 2 S-adenosyl-L-methionine = 3-methylsulfanyl-L-aspartate(89)-[ribosomal protein uS12]-hydrogen + (sulfur carrier)-H + 5'-deoxyadenosine + L-methionine + A + S-adenosyl-L-homocysteine + 2 H(+). Functionally, catalyzes the methylthiolation of an aspartic acid residue of ribosomal protein uS12. This Roseobacter denitrificans (strain ATCC 33942 / OCh 114) (Erythrobacter sp. (strain OCh 114)) protein is Ribosomal protein uS12 methylthiotransferase RimO.